Consider the following 472-residue polypeptide: Glutamate-1-semialdehyde 2,1-aminomutase 2, chloroplastic (472 aa).

The N-terminal 36 residues, Met-1–Ser-36, are a transit peptide targeting the chloroplast. Lys-312 bears the N6-(pyridoxal phosphate)lysine mark.

It belongs to the class-III pyridoxal-phosphate-dependent aminotransferase family. HemL subfamily. Homodimer. Pyridoxal 5'-phosphate serves as cofactor. As to expression, expressed in leaf primordia and shoot apical meristems (SAM).

The protein resides in the plastid. Its subcellular location is the chloroplast. It catalyses the reaction (S)-4-amino-5-oxopentanoate = 5-aminolevulinate. Its pathway is porphyrin-containing compound metabolism; protoporphyrin-IX biosynthesis; 5-aminolevulinate from L-glutamyl-tRNA(Glu): step 2/2. It functions in the pathway porphyrin-containing compound metabolism; chlorophyll biosynthesis. Functionally, transaminase converting glutamate 1-semialdehyde (GSA) to 5-aminolevulinate (ALA). Involved in the biosynthesis of tetrapyrroles. This Arabidopsis thaliana (Mouse-ear cress) protein is Glutamate-1-semialdehyde 2,1-aminomutase 2, chloroplastic.